The following is a 1035-amino-acid chain: Kinesin-like protein KIN-4A (1035 aa).

The Kinesin motor domain maps to 11–370 (SVKVAVHIRP…LKYANRARNI (360 aa)). An ATP-binding site is contributed by 90–97 (GQTGSGKT). Coiled coils occupy residues 408–436 (CAEVQALKERIVWLETANEELCRELHEYR), 504–707 (QNSM…RKSS), and 881–911 (KEIVGLLRQSELRRKEAEKELKLREQAIATS). Residues 704 to 724 (RKSSPREHSAGTNGFGTNGQT) form a disordered region.

The protein belongs to the TRAFAC class myosin-kinesin ATPase superfamily. Kinesin family. KIN-4 subfamily. Homodimer. As to expression, expressed in stems and flowers. Detected in cells undergoing secondary wall deposition including developing interfascicular fibers and xylem cells, but also in dividing cells and expanding/elongating parenchyma cells.

It localises to the cytoplasm. Its subcellular location is the cytoskeleton. Kinesin-like motor protein involved in the control of the oriented deposition of cellulose microfibrils. Its motor activity is directed toward the microtubule's plus end. It possesses the potential to drive long-distance transport of cargo along cortical microtubules. Regulates cell wall mechanics during cell elongation, by the regulation of primary and secondary walls deposition. Contributes to cortical microtubule-mediated trafficking of cell wall components. The sequence is that of Kinesin-like protein KIN-4A from Arabidopsis thaliana (Mouse-ear cress).